A 678-amino-acid chain; its full sequence is Secretin ExeD (678 aa).

An N-terminal signal peptide occupies residues 1–25; sequence MINKGKSWRLATVAAALMMAGSAWA. The tract at residues 26–122 is N0; it reads TEYSASFKNA…VVDETNPGIG (97 aa). The segment at 124–188 is N1; the sequence is EMVTRVVPVR…EVVRRVDKAG (65 aa). The N2 stretch occupies residues 189–264; sequence DQEVDIIKLR…MVRQLDRDLQ (76 aa). The tract at residues 267-347 is N3; it reads GNTRVFYLKY…ELEQVVAKLD (81 aa). The tract at residues 352–602 is secretin; sequence QVLVEAIIVE…VFIRPTILRD (251 aa). A s domain region spans residues 604–678; the sequence is HVYSGISSNK…GAQPFVQGNK (75 aa).

This sequence belongs to the bacterial secretin family. GSP D subfamily. In terms of assembly, forms a cylindrical channel with 15 subunits.

It is found in the cell outer membrane. In terms of biological role, involved in a type II secretion system (T2SS, formerly general secretion pathway, GSP) for the export of proteins. This subunit forms the outer membrane channel. In Aeromonas salmonicida, this protein is Secretin ExeD (exeD).